A 146-amino-acid chain; its full sequence is 3-dehydroquinate dehydratase (146 aa).

The active-site Proton acceptor is tyrosine 24. Asparagine 75, histidine 81, and aspartate 88 together coordinate substrate. The Proton donor role is filled by histidine 101. Substrate-binding positions include leucine 102–serine 103 and arginine 112.

This sequence belongs to the type-II 3-dehydroquinase family. In terms of assembly, homododecamer.

The catalysed reaction is 3-dehydroquinate = 3-dehydroshikimate + H2O. The protein operates within metabolic intermediate biosynthesis; chorismate biosynthesis; chorismate from D-erythrose 4-phosphate and phosphoenolpyruvate: step 3/7. Catalyzes a trans-dehydration via an enolate intermediate. The sequence is that of 3-dehydroquinate dehydratase from Maricaulis maris (strain MCS10) (Caulobacter maris).